A 761-amino-acid chain; its full sequence is Cyclin-D-binding Myb-like transcription factor 1 (761 aa).

The segment at 1–237 (MSTVEEDSDT…TPEEIEKLKE (237 aa)) is interaction with CCND2. The disordered stretch occupies residues 24-51 (DTDGNLILHCPQNDPDEVDSEDSTEPPH). Residues 37–47 (DPDEVDSEDST) are compositionally biased toward acidic residues. The interval 87 to 170 (VTMTATTEVA…IDILMNNIER (84 aa)) is required for transcriptional activation. The tract at residues 87-458 (VTMTATTEVA…DNTAISPSPM (372 aa)) is required for DNA-binding. An interaction with CCND1, CCND2 and CCND3 region spans residues 176–761 (GIKDATEIIF…KDVEDLVNCH (586 aa)). A Myb-like 1 domain is found at 225-263 (GKYTPEEIEKLKELRIKHGNDWATIGAALGRSASSVKDR). An HTH myb-type domain is found at 268–333 (KDTCNTGKWT…KWLNYLNWKQ (66 aa)). A DNA-binding region (H-T-H motif) is located at residues 306 to 329 (WAAVAERVGTRSEKQCRSKWLNYL). Residues 339–388 (WTKEDEINLILRIAELDVADENDINWDLLAEGWSSVRSPQWLRSKWWTIK) form the Myb-like 2 domain. The required for transcriptional activation stretch occupies residues 459-761 (AALQIPVQIT…KDVEDLVNCH (303 aa)). Disordered regions lie at residues 584–625 (SLSQ…MTIQ) and 740–761 (GSSL…VNCH).

The protein belongs to the DMTF1 family. Interacts with the D-type cyclins CCND1, CCND2 and CCND3. Interaction with D-type cyclins may modulate transcriptional activation by this protein. Phosphorylated by the cyclin-D2/CDK4, cyclin-D3/CDK4 and cyclin-D2/CDK6 complexes and to a lesser extent by the cyclin-D1/CDK4 complex. Ubiquitously expressed (at mRNA level). Expressed in brain, intestine, kidney, lung, pancreas, skin, spleen and tongue (at protein level). Expressed at high levels in testis and thymus (at protein level). In all tissues examined, expression is predominant in non-proliferating and differentiated cell types. These include epithelial, interstitial and smooth muscle cells of the intestine, differentiated spermatids, sperm and interstitial cells of the testis, and lymphoid cells of the medullary compartment of the thymus.

Its subcellular location is the nucleus. In terms of biological role, transcriptional activator which activates the CDKN2A/ARF locus in response to Ras-Raf signaling, thereby promoting p53/TP53-dependent growth arrest. May also cooperate with MYB to activate transcription of the ANPEP gene. Binds to the consensus sequence 5'-CCCG[GT]ATGT-3'. This is Cyclin-D-binding Myb-like transcription factor 1 (Dmtf1) from Mus musculus (Mouse).